The following is a 322-amino-acid chain: Acetyl-coenzyme A carboxylase carboxyl transferase subunit beta (322 aa).

The 270-residue stretch at 24-293 folds into the CoA carboxyltransferase N-terminal domain; sequence LWIKCPDTGQ…PAVEEPAVVD (270 aa).

It belongs to the AccD/PCCB family. As to quaternary structure, acetyl-CoA carboxylase is a heterohexamer composed of biotin carboxyl carrier protein (AccB), biotin carboxylase (AccC) and two subunits each of ACCase subunit alpha (AccA) and ACCase subunit beta (AccD).

It localises to the cytoplasm. It catalyses the reaction N(6)-carboxybiotinyl-L-lysyl-[protein] + acetyl-CoA = N(6)-biotinyl-L-lysyl-[protein] + malonyl-CoA. It functions in the pathway lipid metabolism; malonyl-CoA biosynthesis; malonyl-CoA from acetyl-CoA: step 1/1. Its function is as follows. Component of the acetyl coenzyme A carboxylase (ACC) complex. Biotin carboxylase (BC) catalyzes the carboxylation of biotin on its carrier protein (BCCP) and then the CO(2) group is transferred by the transcarboxylase to acetyl-CoA to form malonyl-CoA. This is Acetyl-coenzyme A carboxylase carboxyl transferase subunit beta from Rhodopseudomonas palustris (strain HaA2).